The chain runs to 425 residues: CinA-like protein (425 aa).

Belongs to the CinA family.

In Desulfovibrio desulfuricans (strain ATCC 27774 / DSM 6949 / MB), this protein is CinA-like protein.